The primary structure comprises 76 residues: Kappa-actitoxin-Avd4n (76 aa).

The N-terminal stretch at 1–19 (MNKAFFLCLVVLCAAVVFA) is a signal peptide. Positions 20 to 31 (AEDLQKGKHAPF) are excised as a propeptide. 2 cysteine pairs are disulfide-bonded: C37–C72 and C39–C65.

It belongs to the sea anemone type 3 (BDS) potassium channel toxin family. Lacks the conventional Cys residue at position 55. Thus, only 2 disulfide are possible present. Experimental results show no expression in the ectodermal tissue from the distal and proximal tentacles, body wall, and oral disk. Since paralogs are expressed in this tissue, an expression of this toxin in this tissue is probable. The negative results could be explained by the very low abundance of EST sequences.

Its subcellular location is the secreted. It localises to the nematocyst. In terms of biological role, blocks Kv3 voltage-gated potassium channels. Reduces blood pressure. The sequence is that of Kappa-actitoxin-Avd4n from Anemonia viridis (Snakelocks anemone).